Here is a 252-residue protein sequence, read N- to C-terminus: Octanoyltransferase (252 aa).

The 182-residue stretch at 56–237 (ADTGDEIWLV…RLIANLDGAS (182 aa)) folds into the BPL/LPL catalytic domain. Substrate-binding positions include 96 to 103 (RGGQITYH), 168 to 170 (ALG), and 181 to 183 (GLS). The active-site Acyl-thioester intermediate is Cys-199.

It belongs to the LipB family.

The protein localises to the cytoplasm. It carries out the reaction octanoyl-[ACP] + L-lysyl-[protein] = N(6)-octanoyl-L-lysyl-[protein] + holo-[ACP] + H(+). Its pathway is protein modification; protein lipoylation via endogenous pathway; protein N(6)-(lipoyl)lysine from octanoyl-[acyl-carrier-protein]: step 1/2. Catalyzes the transfer of endogenously produced octanoic acid from octanoyl-acyl-carrier-protein onto the lipoyl domains of lipoate-dependent enzymes. Lipoyl-ACP can also act as a substrate although octanoyl-ACP is likely to be the physiological substrate. This is Octanoyltransferase from Burkholderia lata (strain ATCC 17760 / DSM 23089 / LMG 22485 / NCIMB 9086 / R18194 / 383).